Consider the following 61-residue polypeptide: Small ribosomal subunit protein uS14 (61 aa).

Zn(2+) contacts are provided by Cys24, Cys27, Cys40, and Cys43.

The protein belongs to the universal ribosomal protein uS14 family. Zinc-binding uS14 subfamily. Part of the 30S ribosomal subunit. Contacts proteins S3 and S10. The cofactor is Zn(2+).

Its function is as follows. Binds 16S rRNA, required for the assembly of 30S particles and may also be responsible for determining the conformation of the 16S rRNA at the A site. The sequence is that of Small ribosomal subunit protein uS14 from Desulfitobacterium hafniense (strain Y51).